Consider the following 119-residue polypeptide: Large ribosomal subunit protein uL18 (119 aa).

This sequence belongs to the universal ribosomal protein uL18 family. In terms of assembly, part of the 50S ribosomal subunit; part of the 5S rRNA/L5/L18/L25 subcomplex. Contacts the 5S and 23S rRNAs.

This is one of the proteins that bind and probably mediate the attachment of the 5S RNA into the large ribosomal subunit, where it forms part of the central protuberance. The protein is Large ribosomal subunit protein uL18 of Micrococcus luteus (Micrococcus lysodeikticus).